Here is a 263-residue protein sequence, read N- to C-terminus: Oxidoreductase UcpA (263 aa).

Position 10 to 32 (10 to 32 (LITGASQGIGEGIARVFARHGAN)) interacts with NAD(+). Ser141 is a substrate binding site. The active-site Proton acceptor is the Tyr155.

It belongs to the short-chain dehydrogenases/reductases (SDR) family.

The protein is Oxidoreductase UcpA (ucpA) of Salmonella typhi.